The primary structure comprises 339 residues: D-erythrose-4-phosphate dehydrogenase (339 aa).

Position 11–12 (11–12) interacts with NAD(+); sequence RI. Residues 158–160, Arg-204, 217–218, and Arg-240 contribute to the substrate site; these read SCT and TK. Catalysis depends on Cys-159, which acts as the Nucleophile. Asn-322 contributes to the NAD(+) binding site.

The protein belongs to the glyceraldehyde-3-phosphate dehydrogenase family. Epd subfamily. As to quaternary structure, homotetramer.

The protein localises to the cytoplasm. It catalyses the reaction D-erythrose 4-phosphate + NAD(+) + H2O = 4-phospho-D-erythronate + NADH + 2 H(+). Its pathway is cofactor biosynthesis; pyridoxine 5'-phosphate biosynthesis; pyridoxine 5'-phosphate from D-erythrose 4-phosphate: step 1/5. In terms of biological role, catalyzes the NAD-dependent conversion of D-erythrose 4-phosphate to 4-phosphoerythronate. This Aliivibrio fischeri (strain MJ11) (Vibrio fischeri) protein is D-erythrose-4-phosphate dehydrogenase.